The sequence spans 761 residues: Cytoplasmic export protein 1 (761 aa).

HEAT repeat units lie at residues 385 to 423 (IYPHFIQGLTDSDATLRLQTLKTIPCIVSCLTERQLNNE) and 498 to 534 (NTIANKILTVIAPGLLDKSPIVRGRAKILFEEYLEKL). Disordered stretches follow at residues 660 to 692 (DDGWIQDESGPSKVPQKHTRPQNSTLAKSIAPS) and 714 to 761 (STVT…DTNW). 2 stretches are compositionally biased toward polar residues: residues 680 to 692 (PQNSTLAKSIAPS) and 714 to 737 (STVTTKSSLSNKTARSKPISSIRG). Acidic residues predominate over residues 747 to 761 (GWDDDGDSDSWDTNW). Ser754 is subject to Phosphoserine.

As to quaternary structure, associates with the nuclear pore complex (NPC). Interacts with GSP1, LOS1, MSN5, NUP116 and TEF2.

Its subcellular location is the cytoplasm. Its function is as follows. Component of the nuclear tRNA export machinery that my collect tRNA from the nuclear tRNA export receptors of the aminoacylation-dependent export and may deliver aminoacylated tRNAs to the translation machinery pathway at the nuclear pore complex. The polypeptide is Cytoplasmic export protein 1 (CEX1) (Saccharomyces cerevisiae (strain ATCC 204508 / S288c) (Baker's yeast)).